The chain runs to 96 residues: Progonadoliberin-1 (96 aa).

The N-terminal stretch at 1 to 26 (MHRKMAVKTLSVWLLLVGTLVPQHCC) is a signal peptide. Gln27 carries the post-translational modification Pyrrolidone carboxylic acid. Residue Gly36 is modified to Glycine amide.

The protein belongs to the GnRH family. Preoptic area of the brain.

Its subcellular location is the secreted. Stimulates the secretion of gonadotropins. The chain is Progonadoliberin-1 (gnrh1) from Verasper moseri (Barfin flounder).